A 600-amino-acid polypeptide reads, in one-letter code: FERM domain-containing protein 3 (600 aa).

The region spanning 31–311 (MRCTIRLLDD…ENQAFYKYAK (281 aa)) is the FERM domain. A disordered region spans residues 413–440 (SAPVLGNSPARGLETTADVTHDEEESIR). Residues 534 to 554 (LLLAAIGLLMVVLPLLLILLE) form a helical membrane-spanning segment.

It is found in the membrane. The polypeptide is FERM domain-containing protein 3 (frmd3) (Xenopus tropicalis (Western clawed frog)).